The following is a 311-amino-acid chain: Malate dehydrogenase (311 aa).

Residues 7–13 and D34 each bind NAD(+); that span reads GAAGGIG. Residues R81 and R87 each contribute to the substrate site. Residues N94 and 117–119 each bind NAD(+); that span reads ITN. The substrate site is built by N119 and R153. H177 functions as the Proton acceptor in the catalytic mechanism. M227 contributes to the NAD(+) binding site.

Belongs to the LDH/MDH superfamily. MDH type 1 family. As to quaternary structure, homodimer.

It catalyses the reaction (S)-malate + NAD(+) = oxaloacetate + NADH + H(+). Its function is as follows. Catalyzes the reversible oxidation of malate to oxaloacetate. The chain is Malate dehydrogenase from Shewanella sediminis (strain HAW-EB3).